Here is a 256-residue protein sequence, read N- to C-terminus: N-acetyl-D-glucosamine kinase (256 aa).

ATP-binding positions include 4 to 11 and 133 to 140; these read GFDMGGTK and GVGGGLIV. Zn(2+)-binding residues include H157, C177, C179, and C184.

The protein belongs to the ROK (NagC/XylR) family. NagK subfamily.

It catalyses the reaction N-acetyl-D-glucosamine + ATP = N-acetyl-D-glucosamine 6-phosphate + ADP + H(+). Its pathway is cell wall biogenesis; peptidoglycan recycling. In terms of biological role, catalyzes the phosphorylation of N-acetyl-D-glucosamine (GlcNAc) derived from cell-wall degradation, yielding GlcNAc-6-P. The sequence is that of N-acetyl-D-glucosamine kinase (nagK) from Yersinia pestis bv. Antiqua (strain Nepal516).